We begin with the raw amino-acid sequence, 369 residues long: RAB6-interacting golgin (369 aa).

Residues 1–128 are disordered; the sequence is MAQGWAGFSE…HNNVEILPPK (128 aa). A compositionally biased stretch (basic and acidic residues) spans 11 to 27; it reads EELRRLKQTKDPFEPQR. 2 stretches are compositionally biased toward polar residues: residues 46-61 and 82-93; these read EQSQKLGLQDGSTSLL and SPTLPSHFTLTS. Residues 106–120 are compositionally biased toward basic and acidic residues; it reads QPKELGLENSHDGHN. Positions 145–297 form a coiled coil; sequence RWEVLQQEQR…EVERLLHEQE (153 aa). The necessary for interaction with RCHY1 stretch occupies residues 188–369; that stretch reads IQKELQALDD…GNDISAALAT (182 aa). Residues 334-369 form a disordered region; the sequence is VSPKVDDQCGNSSSIPFLSPNCPNQEGNDISAALAT. Residues 342 to 361 show a composition bias toward polar residues; the sequence is CGNSSSIPFLSPNCPNQEGN.

This sequence belongs to the GORAB family. As to quaternary structure, interacts with SCYL1. Interacts with RCHY1 and RAB6A/RAB6.

It is found in the cytoplasm. It localises to the golgi apparatus. The chain is RAB6-interacting golgin (GORAB) from Homo sapiens (Human).